The primary structure comprises 271 residues: Short-chain dehydrogenase/reductase SAT3 (271 aa).

NADP(+) contacts are provided by Ser17, Asp40, and Asn67. Ser153 (proton donor) is an active-site residue. NADP(+) is bound by residues Tyr168, Lys172, and Ser203. The active-site Proton acceptor is the Tyr168. Residue Lys172 is the Lowers pKa of active site Tyr of the active site.

It belongs to the short-chain dehydrogenases/reductases (SDR) family.

Its pathway is mycotoxin biosynthesis. In terms of biological role, short-chain dehydrogenase/reductase; part of the satratoxin SC1 cluster involved in the biosynthesis of satratoxins, trichothecene mycotoxins that are associated with human food poisonings. Satratoxins are suggested to be made by products of multiple gene clusters (SC1, SC2 and SC3) that encode 21 proteins in all, including polyketide synthases, acetyltransferases, and other enzymes expected to modify the trichothecene skeleton. SC1 encodes 10 proteins, SAT1 to SAT10. The largest are SAT8, which encodes a putative polyketide synthase (PKS) with a conventional non-reducing architecture, and SAT10, a putative protein containing four ankyrin repeats and thus may be involved in protein scaffolding. The putative short-chain reductase SAT3 may assist the PKS in some capacity. SAT6 contains a secretory lipase domain and acts probably as a trichothecene esterase. SAT5 encodes a putative acetyltransferase, and so, with SAT6, may affect endogenous protection from toxicity. The probable transcription factor SAT9 may regulate the expression of the SC1 cluster. SC2 encodes proteins SAT11 to SAT16, the largest of which encodes the putative reducing PKS SAT13. SAT11 is a cytochrome P450 monooxygenase, while SAT14 and SAT16 are probable acetyltransferases. The SC2 cluster may be regulated by the transcription factor SAT15. SC3 is a small cluster that encodes 5 proteins, SAT17 to SAT21. SAT21 is a putative MFS-type transporter which may have a role in exporting secondary metabolites. The four other proteins putatively encoded in SC3 include the taurine hydroxylase-like protein SAT17, the O-methyltransferase SAT18, the acetyltransferase SAT19, and the Cys6-type zinc finger SAT20, the latter being probably involved in regulation of SC3 expression. In Stachybotrys chartarum (strain CBS 109288 / IBT 7711) (Toxic black mold), this protein is Short-chain dehydrogenase/reductase SAT3.